A 537-amino-acid polypeptide reads, in one-letter code: O-phosphoserine--tRNA(Cys) ligase (537 aa).

Substrate-binding positions include 186–188 (HMT), 231–233 (SAS), 273–274 (YY), and N317.

The protein belongs to the class-II aminoacyl-tRNA synthetase family. O-phosphoseryl-tRNA(Cys) synthetase subfamily. In terms of assembly, homotetramer. Interacts with SepCysS.

The enzyme catalyses tRNA(Cys) + O-phospho-L-serine + ATP = O-phospho-L-seryl-tRNA(Cys) + AMP + diphosphate. Functionally, catalyzes the attachment of O-phosphoserine (Sep) to tRNA(Cys). The protein is O-phosphoserine--tRNA(Cys) ligase of Methanococcus maripaludis (strain C6 / ATCC BAA-1332).